Reading from the N-terminus, the 394-residue chain is Phosphoglycerate kinase (394 aa).

Substrate contacts are provided by residues 21–23, R37, 60–63, R115, and R148; these read DLN and HLGR. Residues K199, E321, and 347-350 each bind ATP; that span reads GGDT.

Belongs to the phosphoglycerate kinase family. In terms of assembly, monomer.

The protein localises to the cytoplasm. It catalyses the reaction (2R)-3-phosphoglycerate + ATP = (2R)-3-phospho-glyceroyl phosphate + ADP. It functions in the pathway carbohydrate degradation; glycolysis; pyruvate from D-glyceraldehyde 3-phosphate: step 2/5. The protein is Phosphoglycerate kinase of Aromatoleum aromaticum (strain DSM 19018 / LMG 30748 / EbN1) (Azoarcus sp. (strain EbN1)).